The following is a 129-amino-acid chain: Aspartate 1-decarboxylase (129 aa).

The active-site Schiff-base intermediate with substrate; via pyruvic acid is Ser-25. Pyruvic acid (Ser) is present on Ser-25. Thr-57 contacts substrate. Residue Tyr-58 is the Proton donor of the active site. 73–75 (GAA) is a substrate binding site.

Belongs to the PanD family. As to quaternary structure, heterooctamer of four alpha and four beta subunits. The cofactor is pyruvate. Is synthesized initially as an inactive proenzyme, which is activated by self-cleavage at a specific serine bond to produce a beta-subunit with a hydroxyl group at its C-terminus and an alpha-subunit with a pyruvoyl group at its N-terminus.

It is found in the cytoplasm. It carries out the reaction L-aspartate + H(+) = beta-alanine + CO2. Its pathway is cofactor biosynthesis; (R)-pantothenate biosynthesis; beta-alanine from L-aspartate: step 1/1. Functionally, catalyzes the pyruvoyl-dependent decarboxylation of aspartate to produce beta-alanine. The protein is Aspartate 1-decarboxylase of Hydrogenovibrio crunogenus (strain DSM 25203 / XCL-2) (Thiomicrospira crunogena).